Consider the following 110-residue polypeptide: Ferredoxin (110 aa).

4Fe-4S ferredoxin-type domains lie at 2 to 30 (TYIV…YEGE) and 31 to 60 (FMLV…PESP). Positions 9 and 17 each coordinate [3Fe-4S] cluster. [4Fe-4S] cluster-binding residues include cysteine 21, cysteine 40, cysteine 43, and cysteine 46. A [3Fe-4S] cluster-binding site is contributed by cysteine 50.

It depends on [4Fe-4S] cluster as a cofactor. The cofactor is [3Fe-4S] cluster.

Its function is as follows. Ferredoxins are iron-sulfur proteins that transfer electrons in a wide variety of metabolic reactions. The sequence is that of Ferredoxin (fdxA) from Rickettsia typhi (strain ATCC VR-144 / Wilmington).